Reading from the N-terminus, the 299-residue chain is tRNA dimethylallyltransferase (299 aa).

10-17 serves as a coordination point for ATP; sequence GATATGKS. Residue 12–17 coordinates substrate; that stretch reads TATGKS. The interaction with substrate tRNA stretch occupies residues 35–38; sequence DSRQ.

The protein belongs to the IPP transferase family. As to quaternary structure, monomer. It depends on Mg(2+) as a cofactor.

It carries out the reaction adenosine(37) in tRNA + dimethylallyl diphosphate = N(6)-dimethylallyladenosine(37) in tRNA + diphosphate. In terms of biological role, catalyzes the transfer of a dimethylallyl group onto the adenine at position 37 in tRNAs that read codons beginning with uridine, leading to the formation of N6-(dimethylallyl)adenosine (i(6)A). The polypeptide is tRNA dimethylallyltransferase (Rippkaea orientalis (strain PCC 8801 / RF-1) (Cyanothece sp. (strain PCC 8801))).